The primary structure comprises 131 residues: Agouti-signaling protein (131 aa).

Positions 1–20 (MNIFRLLLATLLVSLCFLTA) are cleaved as a signal peptide. Asparagine 38 is a glycosylation site (N-linked (GlcNAc...) asparagine). A disordered region spans residues 57–104 (KSKKISRKEAEKKRSSKKKASMKNVARPRPPPPNPCVATRNSCKSPAP). Cystine bridges form between cysteine 92-cysteine 107, cysteine 99-cysteine 113, cysteine 106-cysteine 124, cysteine 110-cysteine 131, and cysteine 115-cysteine 122. An Agouti domain is found at 92–131 (CVATRNSCKSPAPACCDPCASCQCRFFRSACTCRVLSPSC).

Its subcellular location is the secreted. Functionally, involved in the regulation of melanogenesis. The binding of ASP to MC1R precludes alpha-MSH initiated signaling and thus blocks production of cAMP, leading to a down-regulation of eumelanogenesis (brown/black pigment) and thus increasing synthesis of pheomelanin (yellow/red pigment). The polypeptide is Agouti-signaling protein (ASIP) (Vulpes vulpes (Red fox)).